The sequence spans 175 residues: Nucleoside-triphosphatase THEP1 (175 aa).

ATP contacts are provided by residues 8–15 (GSPGVGKS) and 99–106 (LVVIDEIG).

The protein belongs to the THEP1 NTPase family.

The enzyme catalyses a ribonucleoside 5'-triphosphate + H2O = a ribonucleoside 5'-diphosphate + phosphate + H(+). Functionally, has nucleotide phosphatase activity towards ATP, GTP, CTP, TTP and UTP. May hydrolyze nucleoside diphosphates with lower efficiency. The polypeptide is Nucleoside-triphosphatase THEP1 (Methanosarcina acetivorans (strain ATCC 35395 / DSM 2834 / JCM 12185 / C2A)).